Reading from the N-terminus, the 286-residue chain is uncharacterized protein (286 aa).

Residues 36 to 256 enclose the Radical SAM core domain; that stretch reads ENPQHHPSIE…IKGCLLVQLK (221 aa). The [4Fe-4S] cluster site is built by Cys50, Cys54, and Cys57.

Requires [4Fe-4S] cluster as cofactor.

This is an uncharacterized protein from Methanocaldococcus jannaschii (strain ATCC 43067 / DSM 2661 / JAL-1 / JCM 10045 / NBRC 100440) (Methanococcus jannaschii).